The primary structure comprises 264 residues: Transcription factor bHLH52 (264 aa).

The bHLH domain maps to 134-183 (RELSAQSIAARKRRRRITEKTQELGKLIPGSQKHNTAEMFNAAAKYVKFL).

Homodimer. In terms of tissue distribution, expressed constitutively in roots, leaves, stems, and flowers.

It localises to the nucleus. The chain is Transcription factor bHLH52 (BHLH52) from Arabidopsis thaliana (Mouse-ear cress).